Consider the following 501-residue polypeptide: Aldehyde dehydrogenase 1A1 (501 aa).

Ser-2 is subject to N-acetylserine. Residues Lys-91 and Lys-128 each carry the N6-acetyllysine modification. NAD(+)-binding positions include Leu-167–Asn-170, Lys-193–Glu-196, Gly-226–Pro-227, and Gly-246–Ser-247. Lys-252 is modified (N6-acetyllysine). Residue Glu-269 is the Proton acceptor of the active site. Glu-269 to Gly-271 lines the NAD(+) pocket. Cys-303 acts as the Nucleophile in catalysis. The segment at Leu-336–Ser-501 is mediates interaction with PRMT3. Thr-337 carries the post-translational modification Phosphothreonine. Residue Glu-349 to Lys-353 participates in NAD(+) binding. N6-acetyllysine is present on residues Lys-353 and Lys-367. Glu-400 to Phe-402 is an NAD(+) binding site. Lys-410 bears the N6-acetyllysine mark. A Phosphoserine modification is found at Ser-413. Residues Lys-419, Lys-435, and Lys-495 each carry the N6-acetyllysine modification.

It belongs to the aldehyde dehydrogenase family. As to quaternary structure, homotetramer. Interacts with PRMT3; the interaction is direct, inhibits ALDH1A1 aldehyde dehydrogenase activity and is independent of the methyltransferase activity of PRMT3. In terms of processing, the N-terminus is blocked most probably by acetylation.

It is found in the cytoplasm. The protein resides in the cytosol. Its subcellular location is the cell projection. The protein localises to the axon. It catalyses the reaction an aldehyde + NAD(+) + H2O = a carboxylate + NADH + 2 H(+). The catalysed reaction is all-trans-retinal + NAD(+) + H2O = all-trans-retinoate + NADH + 2 H(+). It carries out the reaction 9-cis-retinal + NAD(+) + H2O = 9-cis-retinoate + NADH + 2 H(+). The enzyme catalyses 11-cis-retinal + NAD(+) + H2O = 11-cis-retinoate + NADH + 2 H(+). It catalyses the reaction 13-cis-retinal + NAD(+) + H2O = 13-cis-retinoate + NADH + 2 H(+). The catalysed reaction is 3-deoxyglucosone + NAD(+) + H2O = 2-dehydro-3-deoxy-D-gluconate + NADH + 2 H(+). It carries out the reaction (E)-4-hydroxynon-2-enal + NAD(+) + H2O = (E)-4-hydroxynon-2-enoate + NADH + 2 H(+). The enzyme catalyses malonaldehyde + NAD(+) + H2O = 3-oxopropanoate + NADH + 2 H(+). It catalyses the reaction hexanal + NAD(+) + H2O = hexanoate + NADH + 2 H(+). The catalysed reaction is propanal + NAD(+) + H2O = propanoate + NADH + 2 H(+). It carries out the reaction acetaldehyde + NAD(+) + H2O = acetate + NADH + 2 H(+). The enzyme catalyses benzaldehyde + NAD(+) + H2O = benzoate + NADH + 2 H(+). It catalyses the reaction 4-aminobutanal + NAD(+) + H2O = 4-aminobutanoate + NADH + 2 H(+). Its pathway is cofactor metabolism; retinol metabolism. Its function is as follows. Cytosolic dehydrogenase that catalyzes the irreversible oxidation of a wide range of aldehydes to their corresponding carboxylic acid. Functions downstream of retinol dehydrogenases and catalyzes the oxidation of retinaldehyde into retinoic acid, the second step in the oxidation of retinol/vitamin A into retinoic acid. This pathway is crucial to control the levels of retinol and retinoic acid, two important molecules which excess can be teratogenic and cytotoxic. Also oxidizes aldehydes resulting from lipid peroxidation like (E)-4-hydroxynon-2-enal/HNE, malonaldehyde and hexanal that form protein adducts and are highly cytotoxic. By participating for instance to the clearance of (E)-4-hydroxynon-2-enal/HNE in the lens epithelium prevents the formation of HNE-protein adducts and lens opacification. Also functions downstream of fructosamine-3-kinase in the fructosamine degradation pathway by catalyzing the oxidation of 3-deoxyglucosone, the carbohydrate product of fructosamine 3-phosphate decomposition, which is itself a potent glycating agent that may react with lysine and arginine side-chains of proteins. Also has an aminobutyraldehyde dehydrogenase activity and is probably part of an alternative pathway for the biosynthesis of GABA/4-aminobutanoate in midbrain, thereby playing a role in GABAergic synaptic transmission. In Equus caballus (Horse), this protein is Aldehyde dehydrogenase 1A1.